A 308-amino-acid polypeptide reads, in one-letter code: Tyrosine recombinase XerD (308 aa).

The Core-binding (CB) domain maps to 13-97 (PSSTEAIQRF…VFKRFFQWAL (85 aa)). Positions 118–302 (RVPKTLSEAQ…ARERLRTLHA (185 aa)) constitute a Tyr recombinase domain. Residues Arg158, Lys183, His254, Arg257, and His280 contribute to the active site. Tyr289 serves as the catalytic O-(3'-phospho-DNA)-tyrosine intermediate.

It belongs to the 'phage' integrase family. XerD subfamily. In terms of assembly, forms a cyclic heterotetrameric complex composed of two molecules of XerC and two molecules of XerD.

Its subcellular location is the cytoplasm. In terms of biological role, site-specific tyrosine recombinase, which acts by catalyzing the cutting and rejoining of the recombining DNA molecules. The XerC-XerD complex is essential to convert dimers of the bacterial chromosome into monomers to permit their segregation at cell division. It also contributes to the segregational stability of plasmids. This Ralstonia nicotianae (strain ATCC BAA-1114 / GMI1000) (Ralstonia solanacearum) protein is Tyrosine recombinase XerD.